The following is a 461-amino-acid chain: V-type ATP synthase beta chain (461 aa).

This sequence belongs to the ATPase alpha/beta chains family.

Its function is as follows. Produces ATP from ADP in the presence of a proton gradient across the membrane. The V-type beta chain is a regulatory subunit. In Streptococcus pneumoniae serotype 19F (strain G54), this protein is V-type ATP synthase beta chain.